We begin with the raw amino-acid sequence, 91 residues long: Small ribosomal subunit protein uS19 (91 aa).

The protein belongs to the universal ribosomal protein uS19 family.

Its function is as follows. Protein S19 forms a complex with S13 that binds strongly to the 16S ribosomal RNA. This chain is Small ribosomal subunit protein uS19, found in Azotobacter vinelandii (strain DJ / ATCC BAA-1303).